The primary structure comprises 351 residues: uncharacterized protein (351 aa).

This is an uncharacterized protein from Gallus gallus (Chicken).